Consider the following 149-residue polypeptide: Calmodulin-1 (149 aa).

A2 is modified (N-acetylalanine). 4 consecutive EF-hand domains span residues 8–43, 44–79, 81–116, and 117–149; these read EQIA…LGQN, PTEA…KMKD, DSEE…LGEK, and LTDE…MLAK. Residues D21, D23, D25, C27, E32, D57, D59, N61, T63, E68, D94, D96, N98, and E105 each contribute to the Ca(2+) site. N6,N6,N6-trimethyllysine is present on K116. Ca(2+) contacts are provided by D130, D132, D134, Q136, and E141.

It belongs to the calmodulin family. High expression in stolon tips and stems, moderate in roots, and very low in leaves. Localized in the meristematic regions of the shoot and root tips, the tip of the developing tuber and the vascular zones of petiole and tuber. Not detected in mesophyll cells.

Functionally, calmodulin mediates the control of a large number of enzymes, ion channels and other proteins by Ca(2+). Among the enzymes to be stimulated by the calmodulin-Ca(2+) complex are a number of protein kinases and phosphatases. The chain is Calmodulin-1 (PCM1) from Solanum tuberosum (Potato).